The sequence spans 241 residues: Chaperone protein HifB (241 aa).

The first 27 residues, 1–27, serve as a signal peptide directing secretion; it reads MGKTMFKKTLLFFTALFFTALCAFSAN.

Belongs to the periplasmic pilus chaperone family.

The protein localises to the periplasm. Mediates assembly of pili by forming soluble multimeric complexes with pili subunits as an intermediate step in the assembly process. This protein is involved in type B pili (HifA) assembly. The polypeptide is Chaperone protein HifB (hifB) (Haemophilus influenzae).